We begin with the raw amino-acid sequence, 377 residues long: MMARWCVGWPAAARGGRDELTWQAELTAHAAGEFSMAAAQANAVMEDQAQVMASPGATLVGVYDGHGGPDASRFLRSRLFPLIHEFAAERGGAVDADVIRKAFLAADEEYLQLLRWSLPNMSRAAASGSCCLLGAISGDTLYVANAGDSRAVLGRRAAAGQTVAERLSTEHNVASEEVRRELAALHPDDGEVVVHARGAWRVKGIIQVARAIGDVYLKTPEFKRDPAVQRLCSAAAAVELARPVVTAEPSIHARKLKAGVDLFVVFASDGLWEHLSDEAAVQLVSKSSTRRGVAARLVQAALGEAARKREVRRGDLRRIERGVRRHFHDDITAVVVFLDLDDDGGRRARRRGRVVDSSSSSCSNTPLDVYSLYNSTA.

The region spanning 30 to 338 (AAGEFSMAAA…DDITAVVVFL (309 aa)) is the PPM-type phosphatase domain. Mn(2+) contacts are provided by Asp64, Gly65, Asp269, and Asp329.

It belongs to the PP2C family. Mg(2+) is required as a cofactor. Mn(2+) serves as cofactor.

It carries out the reaction O-phospho-L-seryl-[protein] + H2O = L-seryl-[protein] + phosphate. The catalysed reaction is O-phospho-L-threonyl-[protein] + H2O = L-threonyl-[protein] + phosphate. The protein is Probable protein phosphatase 2C 61 of Oryza sativa subsp. japonica (Rice).